A 410-amino-acid polypeptide reads, in one-letter code: MVCFRLFPVPGSGLVLVCLVLGAVRSYALELNLTDSENATCLYAKWQMNFTVRYETTNKTYKTVTISDHGTVTYNGSICGDDQNGPKIAVQFGPGFSWIANFTKAASTYSIDSVSFSYNTGDNTTFPDAEDKGILTVDELLAIRIPLNDLFRCNSLSTLEKNDVVQHYWDVLVQAFVQNGTVSTNEFLCDKDKTSTVAPTIHTTVPSPTTTPTPKEKPEAGTYSVNNGNDTCLLATMGLQLNITQDKVASVININPNTTHSTGSCRSHTALLRLNSSTIKYLDFVFAVKNENRFYLKEVNISMYLVNGSVFSIANNNLSYWDAPLGSSYMCNKEQTVSVSGAFQINTFDLRVQPFNVTQGKYSTAQDCSADDDNFLVPIAVGAALAGVLILVLLAYFIGLKHHHAGYEQF.

The N-terminal stretch at 1–28 (MVCFRLFPVPGSGLVLVCLVLGAVRSYA) is a signal peptide. The interval 29–192 (LELNLTDSEN…STNEFLCDKD (164 aa)) is first lumenal domain. The Lumenal segment spans residues 29–375 (LELNLTDSEN…QDCSADDDNF (347 aa)). Asn32 and Asn38 each carry an N-linked (GlcNAc...) (polylactosaminoglycan) asparagine glycan. A disulfide bridge links Cys41 with Cys79. N-linked (GlcNAc...) asparagine glycans are attached at residues Asn49, Asn58, Asn75, Asn101, Asn123, and Asn179. Cysteines 153 and 189 form a disulfide. Residues 193–228 (KTSTVAPTIHTTVPSPTTTPTPKEKPEAGTYSVNNG) form a hinge region. Ser195 carries an O-linked (GalNAc...) serine glycan. 4 O-linked (GalNAc...) threonine glycosylation sites follow: Thr196, Thr200, Thr203, and Thr204. The segment covering 199–213 (PTIHTTVPSPTTTPT) has biased composition (low complexity). Residues 199 to 221 (PTIHTTVPSPTTTPTPKEKPEAG) form a disordered region. The O-linked (GalNAc...) serine; partial glycan is linked to Ser207. Thr209 is a glycosylation site (O-linked (GalNAc...) threonine; partial). O-linked (GalNAc...) threonine glycosylation is found at Thr210 and Thr211. An O-linked (GalNAc...) threonine; partial glycan is attached at Thr213. N-linked (GlcNAc...) asparagine glycosylation is found at Asn229, Asn242, Asn257, Asn275, and Asn300. Residues 229–375 (NDTCLLATMG…QDCSADDDNF (147 aa)) form a second lumenal domain region. Cys232 and Cys265 form a disulfide bridge. Residue Asn307 is glycosylated (N-linked (GlcNAc...) (polylactosaminoglycan) asparagine). N-linked (GlcNAc...) asparagine glycans are attached at residues Asn317 and Asn356. A disulfide bond links Cys331 and Cys368. Residues 376–399 (LVPIAVGAALAGVLILVLLAYFIG) traverse the membrane as a helical segment. Topologically, residues 400–410 (LKHHHAGYEQF) are cytoplasmic. The segment at 401-404 (KHHH) is important for binding and subsequent lysosomal degradation of target proteins.

Belongs to the LAMP family. Monomer. Homodimer. Homotrimer. Forms large homooligomers. Interacts (via its cytoplasmic region) with HSPA8; HSPA8 mediates recruitment of proteins with a KFERQ motif to the surface of the lysosome for chaperone-mediated autophagy. Interacts with HSP90 in the lysosome lumen; this enhances LAMP2 stability. Interacts with MLLT11. Interacts with ABCB9. Interacts with FURIN. Interacts with CT55; this interaction may be important for LAMP2 protein stability. Interacts with TMEM175; inhibiting the proton channel activity of TMEM175. Forms a ternary complex with RAB7A and RUFY4 (via RUN domain); the interaction with RAB7A is mediated by RUFY4 (via RUN and coiled coil domains). In terms of assembly, (Microbial infection) Interacts with mumps virus protein F; this interaction promotes protein F cleavage by FURIN. Post-translationally, O- and N-glycosylated; some of the 16 N-linked glycans are polylactosaminoglycans. In terms of tissue distribution, isoform LAMP-2A is highly expressed in placenta, lung and liver, less in kidney and pancreas, low in brain and skeletal muscle. Isoform LAMP-2B is detected in spleen, thymus, prostate, testis, small intestine, colon, skeletal muscle, brain, placenta, lung, kidney, ovary and pancreas and liver. Isoform LAMP-2C is detected in small intestine, colon, heart, brain, skeletal muscle, and at lower levels in kidney and placenta.

It is found in the lysosome membrane. The protein resides in the endosome membrane. The protein localises to the cell membrane. It localises to the cytoplasmic vesicle. Its subcellular location is the autophagosome membrane. Functionally, lysosomal membrane glycoprotein which plays an important role in lysosome biogenesis, lysosomal pH regulation and autophagy. Acts as an important regulator of lysosomal lumen pH regulation by acting as a direct inhibitor of the proton channel TMEM175, facilitating lysosomal acidification for optimal hydrolase activity. Plays an important role in chaperone-mediated autophagy, a process that mediates lysosomal degradation of proteins in response to various stresses and as part of the normal turnover of proteins with a long biological half-live. Functions by binding target proteins, such as GAPDH, NLRP3 and MLLT11, and targeting them for lysosomal degradation. In the chaperone-mediated autophagy, acts downstream of chaperones, such as HSPA8/HSC70, which recognize and bind substrate proteins and mediate their recruitment to lysosomes, where target proteins bind LAMP2. Plays a role in lysosomal protein degradation in response to starvation. Required for the fusion of autophagosomes with lysosomes during autophagy. Cells that lack LAMP2 express normal levels of VAMP8, but fail to accumulate STX17 on autophagosomes, which is the most likely explanation for the lack of fusion between autophagosomes and lysosomes. Required for normal degradation of the contents of autophagosomes. Required for efficient MHC class II-mediated presentation of exogenous antigens via its function in lysosomal protein degradation; antigenic peptides generated by proteases in the endosomal/lysosomal compartment are captured by nascent MHC II subunits. Is not required for efficient MHC class II-mediated presentation of endogenous antigens. Modulates chaperone-mediated autophagy. Decreases presentation of endogenous antigens by MHCII. Does not play a role in the presentation of exogenous and membrane-derived antigens by MHCII. Its function is as follows. (Microbial infection) Supports the FURIN-mediated cleavage of mumps virus fusion protein F by interacting with both FURIN and the unprocessed form but not the processed form of the viral protein F. The protein is Lysosome-associated membrane glycoprotein 2 (LAMP2) of Homo sapiens (Human).